Consider the following 2388-residue polypeptide: Hybrid signal transduction histidine kinase M (2388 aa).

Disordered stretches follow at residues 1-32 (MSNY…NNFN), 42-61 (FNTP…NSIS), 69-111 (NECN…STPI), 123-209 (NRSN…NAYP), 237-337 (TLLN…SPKL), 361-421 (SPHG…YNDN), 430-449 (TRNT…SSSF), and 486-542 (IYTP…NNNE). The span at 69-82 (NECNSGGEQSPKIK) shows a compositional bias: polar residues. Composition is skewed to low complexity over residues 83–110 (TNNN…KSTP), 125–206 (SNLN…SNSN), and 242–288 (SSNN…NNGG). The segment covering 293–306 (QFISSDNKYNTVGN) has biased composition (polar residues). Over residues 309 to 322 (HHHHHHQLHNHRHS) the composition is skewed to basic residues. Low complexity-rich tracts occupy residues 325-337 (QGSS…SPKL), 361-399 (SPHG…NQNN), 410-419 (NNSNDSFDYN), and 432-449 (NTGY…SSSF). Residues 489–505 (PPYPQPYPQPPQLPPPS) show a composition bias toward pro residues. Residues 506-541 (SSSSLSKENDNVDNNNTNNNNNNNNNNNNNNNNNNN) are compositionally biased toward low complexity. The next 4 helical transmembrane spans lie at 550 to 570 (TMNL…FLMV), 589 to 609 (FILI…LLVV), 645 to 665 (YIFL…NLFF), and 679 to 699 (NIST…SHIP). A disordered region spans residues 732 to 888 (NNDNKNKIND…NNNEEDDEEE (157 aa)). Basic and acidic residues predominate over residues 735–744 (NKNKINDKSD). Residues 745–880 (NSNSITNNNN…NNNNNNNNNN (136 aa)) are compositionally biased toward low complexity. A run of 3 helical transmembrane segments spans residues 896–916 (FQIF…LIVL), 953–973 (VQFQ…LLLV), and 1025–1045 (CSVG…WMSI). The Histidine kinase domain occupies 1093-1499 (RLVQNTGSII…VFELQVPMKC (407 aa)). Basic residues predominate over residues 1236–1257 (PIHHHRHHHRHHHHHHHHHHHH). Positions 1236-1410 (PIHHHRHHHR…INNNINNNNN (175 aa)) are disordered. Residues 1260–1274 (DDDDYDDDNDDDNNT) are compositionally biased toward acidic residues. The segment covering 1286–1315 (LSDKIKDNQDENLELKKSNNDKIIENKENQ) has biased composition (basic and acidic residues). Residues 1316–1410 (ENNNNNNNNN…INNNINNNNN (95 aa)) are compositionally biased toward low complexity. The region spanning 1541 to 1656 (KILVIDDNPN…QLTVLSQLLP (116 aa)) is the Response regulatory 1 domain. Residue D1592 is modified to 4-aspartylphosphate. 5 disordered regions span residues 1666 to 1702 (SNQN…NIDF), 1960 to 2022 (GNNS…NSSN), 2036 to 2121 (CKGD…DIIN), 2133 to 2183 (QQQL…VKSS), and 2218 to 2256 (NQLN…NNND). Gly residues predominate over residues 1676-1696 (SNGGGGGGGGGGGGGGGGGSG). Over residues 1974–1985 (TNNNTTTTTTTT) the composition is skewed to low complexity. The span at 1986-2010 (QPKKSPILTSSNGSDKSEGSTGSNR) shows a compositional bias: polar residues. Positions 2054–2064 (DSSSSSSSSDS) are enriched in low complexity. Residues 2065-2076 (HGQDDHSYRLED) are compositionally biased toward basic and acidic residues. 2 stretches are compositionally biased toward low complexity: residues 2078–2109 (SISS…SGIN) and 2133–2165 (QQQL…LPIP). Residues 2169 to 2183 (INSSGASSGIKVKSS) are compositionally biased toward polar residues. One can recognise a Response regulatory 2 domain in the interval 2262-2383 (NILLVEDNLV…LLISLLKKLV (122 aa)). D2313 bears the 4-aspartylphosphate mark.

Activation probably requires transfer of a phosphate group between a histidine in the kinase core (transmitter) domain and an aspartate of the receiver domain.

It localises to the membrane. It catalyses the reaction ATP + protein L-histidine = ADP + protein N-phospho-L-histidine.. Its function is as follows. Acts as a receptor histidine kinase for a signal transduction pathway. This protein undergoes an ATP-dependent autophosphorylation at a conserved histidine residue in the kinase core, and a phosphoryl group is then transferred to a conserved aspartate residue in the receiver domain. In Dictyostelium discoideum (Social amoeba), this protein is Hybrid signal transduction histidine kinase M (dhkM).